The chain runs to 657 residues: DNA mismatch repair protein MutL (657 aa).

It belongs to the DNA mismatch repair MutL/HexB family.

This protein is involved in the repair of mismatches in DNA. It is required for dam-dependent methyl-directed DNA mismatch repair. May act as a 'molecular matchmaker', a protein that promotes the formation of a stable complex between two or more DNA-binding proteins in an ATP-dependent manner without itself being part of a final effector complex. This Streptococcus agalactiae serotype III (strain NEM316) protein is DNA mismatch repair protein MutL.